We begin with the raw amino-acid sequence, 217 residues long: 2-C-methyl-D-erythritol 4-phosphate cytidylyltransferase (217 aa).

Belongs to the IspD/TarI cytidylyltransferase family. IspD subfamily.

The catalysed reaction is 2-C-methyl-D-erythritol 4-phosphate + CTP + H(+) = 4-CDP-2-C-methyl-D-erythritol + diphosphate. Its pathway is isoprenoid biosynthesis; isopentenyl diphosphate biosynthesis via DXP pathway; isopentenyl diphosphate from 1-deoxy-D-xylulose 5-phosphate: step 2/6. Its function is as follows. Catalyzes the formation of 4-diphosphocytidyl-2-C-methyl-D-erythritol from CTP and 2-C-methyl-D-erythritol 4-phosphate (MEP). This Chlamydia abortus (strain DSM 27085 / S26/3) (Chlamydophila abortus) protein is 2-C-methyl-D-erythritol 4-phosphate cytidylyltransferase.